A 714-amino-acid chain; its full sequence is Fatty acid oxidation complex subunit alpha (714 aa).

The segment at 1–190 is enoyl-CoA hydratase; that stretch reads MEMASAFTLN…KLGLVDDVVP (190 aa). The tract at residues 306 to 714 is 3-hydroxyacyl-CoA dehydrogenase; sequence APLNSVGILG…FWKTTATDLQ (409 aa).

This sequence in the N-terminal section; belongs to the enoyl-CoA hydratase/isomerase family. It in the central section; belongs to the 3-hydroxyacyl-CoA dehydrogenase family. In terms of assembly, heterotetramer of two alpha chains (FadJ) and two beta chains (FadI).

Its subcellular location is the cytoplasm. It carries out the reaction a (3S)-3-hydroxyacyl-CoA = a (2E)-enoyl-CoA + H2O. It catalyses the reaction a 4-saturated-(3S)-3-hydroxyacyl-CoA = a (3E)-enoyl-CoA + H2O. The enzyme catalyses a (3S)-3-hydroxyacyl-CoA + NAD(+) = a 3-oxoacyl-CoA + NADH + H(+). The catalysed reaction is (3S)-3-hydroxybutanoyl-CoA = (3R)-3-hydroxybutanoyl-CoA. It participates in lipid metabolism; fatty acid beta-oxidation. In terms of biological role, catalyzes the formation of a hydroxyacyl-CoA by addition of water on enoyl-CoA. Also exhibits 3-hydroxyacyl-CoA epimerase and 3-hydroxyacyl-CoA dehydrogenase activities. This chain is Fatty acid oxidation complex subunit alpha, found in Escherichia coli O127:H6 (strain E2348/69 / EPEC).